A 599-amino-acid chain; its full sequence is Sulfite reductase [NADPH] flavoprotein alpha-component (599 aa).

One can recognise a Flavodoxin-like domain in the interval 64-202; it reads ITIISASQTG…AASEWRARVV (139 aa). FMN contacts are provided by residues 70-75, 117-120, and 153-162; these read SQTGNA, STQG, and LGDSSYEFFC. The region spanning 234 to 448 is the FAD-binding FR-type domain; sequence DAPLAASLSV…IEHNDNFRLP (215 aa). FAD contacts are provided by residues T322, A356, 386–389, 404–406, Y410, and 419–422; these read RLYS, TVG, and GGAS. NADP(+)-binding positions include 519–520, 525–529, and D561; these read SR and KIYVQ. Position 599 (Y599) interacts with FAD.

This sequence belongs to the NADPH-dependent sulphite reductase flavoprotein subunit CysJ family. In the N-terminal section; belongs to the flavodoxin family. It in the C-terminal section; belongs to the flavoprotein pyridine nucleotide cytochrome reductase family. In terms of assembly, alpha(8)-beta(8). The alpha component is a flavoprotein, the beta component is a hemoprotein. It depends on FAD as a cofactor. Requires FMN as cofactor.

The catalysed reaction is hydrogen sulfide + 3 NADP(+) + 3 H2O = sulfite + 3 NADPH + 4 H(+). It functions in the pathway sulfur metabolism; hydrogen sulfide biosynthesis; hydrogen sulfide from sulfite (NADPH route): step 1/1. Functionally, component of the sulfite reductase complex that catalyzes the 6-electron reduction of sulfite to sulfide. This is one of several activities required for the biosynthesis of L-cysteine from sulfate. The flavoprotein component catalyzes the electron flow from NADPH -&gt; FAD -&gt; FMN to the hemoprotein component. The polypeptide is Sulfite reductase [NADPH] flavoprotein alpha-component (Escherichia coli O6:K15:H31 (strain 536 / UPEC)).